The following is a 68-amino-acid chain: Protein SlyX homolog (68 aa).

The protein belongs to the SlyX family.

The chain is Protein SlyX homolog from Pseudomonas fluorescens (strain SBW25).